Consider the following 76-residue polypeptide: Signal recognition particle 9 kDa protein (76 aa).

This sequence belongs to the SRP9 family. In terms of assembly, heterodimer with SRP14; binds RNA as heterodimer. Component of a signal recognition particle complex that consists of a 7SL RNA molecule of 300 nucleotides and six protein subunits: srpa-72, srpa-68, SRP54, F37F2.2/SRP19, F25G6.8/SRP14 and ZK512.4/SRP9.

It localises to the cytoplasm. In terms of biological role, component of the signal recognition particle (SRP) complex, a ribonucleoprotein complex that mediates the cotranslational targeting of secretory and membrane proteins to the endoplasmic reticulum (ER). SRP9 together with SRP14 and the Alu portion of the SRP RNA, constitutes the elongation arrest domain of SRP. The complex of SRP9 and SRP14 is required for SRP RNA binding. The polypeptide is Signal recognition particle 9 kDa protein (Caenorhabditis elegans).